A 148-amino-acid polypeptide reads, in one-letter code: Endoribonuclease YbeY (148 aa).

Zn(2+)-binding residues include H113, H117, and H123.

Belongs to the endoribonuclease YbeY family. The cofactor is Zn(2+).

It is found in the cytoplasm. In terms of biological role, single strand-specific metallo-endoribonuclease involved in late-stage 70S ribosome quality control and in maturation of the 3' terminus of the 16S rRNA. The chain is Endoribonuclease YbeY from Borrelia duttonii (strain Ly).